Here is a 237-residue protein sequence, read N- to C-terminus: NAD-dependent protein deacylase (237 aa).

A Deacetylase sirtuin-type domain is found at 1–235 (MRVVVLSGAG…PGLLQRLPAL (235 aa)). 8-28 (GAGISAESDVPTFRDDKNGLW) provides a ligand contact to NAD(+). Substrate contacts are provided by Tyr53 and Arg56. 86–89 (QNVD) serves as a coordination point for NAD(+). The active-site Proton acceptor is the His104. Positions 112, 115, 138, and 140 each coordinate Zn(2+). Residues 177 to 179 (GTS), 203 to 205 (NPE), and Ala221 contribute to the NAD(+) site.

It belongs to the sirtuin family. Class III subfamily. Zn(2+) is required as a cofactor.

It is found in the cytoplasm. The catalysed reaction is N(6)-acetyl-L-lysyl-[protein] + NAD(+) + H2O = 2''-O-acetyl-ADP-D-ribose + nicotinamide + L-lysyl-[protein]. It carries out the reaction N(6)-succinyl-L-lysyl-[protein] + NAD(+) + H2O = 2''-O-succinyl-ADP-D-ribose + nicotinamide + L-lysyl-[protein]. Functionally, NAD-dependent lysine deacetylase and desuccinylase that specifically removes acetyl and succinyl groups on target proteins. Modulates the activities of several proteins which are inactive in their acylated form. This Mycobacterium leprae (strain TN) protein is NAD-dependent protein deacylase.